A 135-amino-acid polypeptide reads, in one-letter code: MGLTYQLIPVLVCLLVCTSHLVHGHKCDITLAEIIKTLNILTTRKNSCMELPVADVFAAPKNTTEKETFCRVGIELRRIYRSHTCLNKFLGGLDRNLNSLVSKTCSVNEAKTGTSTLKDLLERLKTIMKEKYSKC.

The first 24 residues, 1–24 (MGLTYQLIPVLVCLLVCTSHLVHG), serve as a signal peptide directing secretion. Cystine bridges form between C27-C135, C48-C85, and C70-C105. N62 carries an N-linked (GlcNAc...) asparagine glycan.

It belongs to the IL-4/IL-13 family.

The protein resides in the secreted. Its function is as follows. Participates in at least several B-cell activation processes as well as of other cell types. It is a costimulator of DNA-synthesis. It induces the expression of class II MHC molecules on resting B-cells. It enhances both secretion and cell surface expression of IgE and IgG1. It also regulates the expression of the low affinity Fc receptor for IgE (CD23) on both lymphocytes and monocytes. Positively regulates IL31RA expression in macrophages. Stimulates autophagy in dendritic cells by interfering with mTORC1 signaling and through the induction of RUFY4. This is Interleukin-4 (IL4) from Bubalus bubalis (Domestic water buffalo).